We begin with the raw amino-acid sequence, 338 residues long: ATPase GET3 (338 aa).

33-40 serves as a coordination point for ATP; that stretch reads KGGVGKTT. The active site involves aspartate 62. The ATP site is built by glutamate 242 and asparagine 269. Cysteine 280 and cysteine 283 together coordinate Zn(2+).

It belongs to the arsA ATPase family. As to quaternary structure, homodimer.

It is found in the cytoplasm. The protein resides in the endoplasmic reticulum. Its function is as follows. ATPase required for the post-translational delivery of tail-anchored (TA) proteins to the endoplasmic reticulum. Recognizes and selectively binds the transmembrane domain of TA proteins in the cytosol. This complex then targets to the endoplasmic reticulum by membrane-bound receptors, where the tail-anchored protein is released for insertion. This process is regulated by ATP binding and hydrolysis. ATP binding drives the homodimer towards the closed dimer state, facilitating recognition of newly synthesized TA membrane proteins. ATP hydrolysis is required for insertion. Subsequently, the homodimer reverts towards the open dimer state, lowering its affinity for the membrane-bound receptor, and returning it to the cytosol to initiate a new round of targeting. The polypeptide is ATPase GET3 (Uncinocarpus reesii (strain UAMH 1704)).